A 702-amino-acid polypeptide reads, in one-letter code: 1,4-alpha-glucan-branching enzyme (702 aa).

The residue at position 2 (A2) is an N-acetylalanine. Residues 62-63 (NE) and 91-93 (WAP) each bind substrate. (1,4-alpha-D-glucosyl)n is bound at residue W107. 118-121 (DYGK) lines the substrate pocket. K143 contacts (1,4-alpha-D-glucosyl)n. Y173 carries the post-translational modification Phosphotyrosine. Residue 333–336 (EILR) participates in substrate binding. D357 serves as the catalytic Nucleophile. The active-site Proton donor is E412.

The protein belongs to the glycosyl hydrolase 13 family. GlgB subfamily. In terms of assembly, monomer.

It carries out the reaction Transfers a segment of a (1-&gt;4)-alpha-D-glucan chain to a primary hydroxy group in a similar glucan chain.. It functions in the pathway glycan biosynthesis; glycogen biosynthesis. Its function is as follows. Glycogen-branching enzyme participates in the glycogen biosynthetic process along with glycogenin and glycogen synthase. Generates alpha-1,6-glucosidic branches from alpha-1,4-linked glucose chains, to increase solubility of the glycogen polymer. This Homo sapiens (Human) protein is 1,4-alpha-glucan-branching enzyme (GBE1).